A 251-amino-acid polypeptide reads, in one-letter code: uncharacterized protein (251 aa).

In terms of domain architecture, Response regulatory spans 3–118 (KVVICDDERI…QLEHILDILV (116 aa)). Aspartate 55 is modified (4-aspartylphosphate). In terms of domain architecture, HTH araC/xylS-type spans 152–249 (NQILSQIKQH…HMSPSDYNKL (98 aa)). 2 consecutive DNA-binding regions (H-T-H motif) follow at residues 169 to 190 (LDLI…KEHV) and 216 to 239 (HYEI…KKYL).

Phosphorylated by SE_0166.

It is found in the cytoplasm. Probable member of the two-component regulatory system SE_0166/SE_0165. This is an uncharacterized protein from Staphylococcus epidermidis (strain ATCC 12228 / FDA PCI 1200).